A 150-amino-acid chain; its full sequence is MVKVVATNKKAYTDYEILETYEAGIVLTGTEVKSLRNGSVNFKDSFCRFKNGELYLLNLHIPPYSHGGVYNHDPERPRKLLLHKRELKRLMGKVQEEGVTIVPLKIYFNDRGIAKVEIAVARGKKKYDKREAIKKREMERKIREYMKYSR.

It belongs to the SmpB family.

The protein localises to the cytoplasm. Its function is as follows. Required for rescue of stalled ribosomes mediated by trans-translation. Binds to transfer-messenger RNA (tmRNA), required for stable association of tmRNA with ribosomes. tmRNA and SmpB together mimic tRNA shape, replacing the anticodon stem-loop with SmpB. tmRNA is encoded by the ssrA gene; the 2 termini fold to resemble tRNA(Ala) and it encodes a 'tag peptide', a short internal open reading frame. During trans-translation Ala-aminoacylated tmRNA acts like a tRNA, entering the A-site of stalled ribosomes, displacing the stalled mRNA. The ribosome then switches to translate the ORF on the tmRNA; the nascent peptide is terminated with the 'tag peptide' encoded by the tmRNA and targeted for degradation. The ribosome is freed to recommence translation, which seems to be the essential function of trans-translation. This Thermotoga maritima (strain ATCC 43589 / DSM 3109 / JCM 10099 / NBRC 100826 / MSB8) protein is SsrA-binding protein.